The chain runs to 206 residues: 2,3-bisphosphoglycerate-dependent phosphoglycerate mutase (206 aa).

Substrate is bound by residues 9-16 (RHGQSEWN), 22-23 (TG), R61, 88-91 (ERDY), K99, 115-116 (RR), and 159-160 (GN). H10 functions as the Tele-phosphohistidine intermediate in the catalytic mechanism. The active-site Proton donor/acceptor is E88.

This sequence belongs to the phosphoglycerate mutase family. BPG-dependent PGAM subfamily. Homodimer.

It carries out the reaction (2R)-2-phosphoglycerate = (2R)-3-phosphoglycerate. The protein operates within carbohydrate degradation; glycolysis; pyruvate from D-glyceraldehyde 3-phosphate: step 3/5. Its function is as follows. Catalyzes the interconversion of 2-phosphoglycerate and 3-phosphoglycerate. The polypeptide is 2,3-bisphosphoglycerate-dependent phosphoglycerate mutase (Brucella melitensis biotype 2 (strain ATCC 23457)).